Here is a 188-residue protein sequence, read N- to C-terminus: dCTP deaminase (188 aa).

DCTP contacts are provided by residues 111 to 116 (KSTYAR), 135 to 137 (TLE), glutamine 156, tyrosine 170, and glutamine 180. Glutamate 137 serves as the catalytic Proton donor/acceptor.

It belongs to the dCTP deaminase family. Homotrimer.

The catalysed reaction is dCTP + H2O + H(+) = dUTP + NH4(+). The protein operates within pyrimidine metabolism; dUMP biosynthesis; dUMP from dCTP (dUTP route): step 1/2. In terms of biological role, catalyzes the deamination of dCTP to dUTP. This Cupriavidus necator (strain ATCC 17699 / DSM 428 / KCTC 22496 / NCIMB 10442 / H16 / Stanier 337) (Ralstonia eutropha) protein is dCTP deaminase.